Consider the following 222-residue polypeptide: 7-cyano-7-deazaguanine synthase (222 aa).

14–24 (FSGGQDSTTCL) provides a ligand contact to ATP. Cys192, Cys201, Cys204, and Cys207 together coordinate Zn(2+).

It belongs to the QueC family. As to quaternary structure, homodimer. The cofactor is Zn(2+).

It catalyses the reaction 7-carboxy-7-deazaguanine + NH4(+) + ATP = 7-cyano-7-deazaguanine + ADP + phosphate + H2O + H(+). The protein operates within purine metabolism; 7-cyano-7-deazaguanine biosynthesis. Its function is as follows. Catalyzes the ATP-dependent conversion of 7-carboxy-7-deazaguanine (CDG) to 7-cyano-7-deazaguanine (preQ(0)). The polypeptide is 7-cyano-7-deazaguanine synthase (Clostridium acetobutylicum (strain ATCC 824 / DSM 792 / JCM 1419 / IAM 19013 / LMG 5710 / NBRC 13948 / NRRL B-527 / VKM B-1787 / 2291 / W)).